The primary structure comprises 1067 residues: Protein bric-a-brac 2 (1067 aa).

A disordered region spans residues 30–121 (MAPPEEPKMV…PPRPLTSSEV (92 aa)). 2 stretches are compositionally biased toward basic and acidic residues: residues 47-62 (HLED…REVE) and 86-98 (KSPE…ELVK). Y55 carries the post-translational modification Phosphotyrosine. A phosphoserine mark is found at S56, S87, and S147. A BTB domain is found at 223–288 (VDVTLSCEGH…MYKGEINVCQ (66 aa)). Disordered stretches follow at residues 312–412 (GRGE…QSQP), 444–505 (ANQR…AAQH), and 525–563 (GAAG…SHHD). The segment covering 326–335 (FDDEDEEEEL) has biased composition (acidic residues). A Phosphoserine modification is found at S377. Residue T384 is modified to Phosphothreonine. Over residues 391-412 (GGESEISERGSSGTPGQSQSQP) the composition is skewed to low complexity. Gly residues-rich tracts occupy residues 525–538 (GAAG…GSGS) and 545–556 (GGTGVAGSGAGA). The HTH psq-type domain occupies 635–687 (FRERGPLKSWRPEAMAEAIFSVLKEGLSLSQAARKFDIPYPTFVLYANRVHNM). A DNA-binding region (H-T-H motif) is located at residues 645-690 (RPEAMAEAIFSVLKEGLSLSQAARKFDIPYPTFVLYANRVHNMLGP). The segment at residues 697-708 (DPRPKARGRPQR) is a DNA-binding region (a.T hook). Disordered stretches follow at residues 796–829 (QILS…PHAQ), 860–879 (AKHQ…PDLS), and 891–967 (VMPS…PYSA). Over residues 812 to 829 (AHHQQQPSHHQQQSPHAQ) the composition is skewed to low complexity. Low complexity predominate over residues 904–914 (AAPNSAASYAR). The span at 915–933 (ELSRERERDRERERERELS) shows a compositional bias: basic and acidic residues. Residues 934–949 (RQYGSQSRGSSSGSGS) show a composition bias toward low complexity.

In terms of tissue distribution, leg imaginal disk at the central region of the tarsus and in eye antenna disk at the basal cylinder.

It is found in the nucleus. In terms of biological role, probably acts as a transcriptional regulator. Required for the specification of the tarsal segment. Also involved in antenna development. This is Protein bric-a-brac 2 (bab2) from Drosophila melanogaster (Fruit fly).